We begin with the raw amino-acid sequence, 87 residues long: Transcriptional regulator PINT87aa (87 aa).

In terms of assembly, interacts with PAF1 complex member PAF1. Interacts with transcription factor FOXM1. As to expression, expressed in brain, liver, kidney and stomach with lower levels in breast, intestine, thyroid and pancreas.

The protein resides in the nucleus. In terms of biological role, enhances the binding of the PAF1 complex to target gene promoters and plays a role in negative regulation of transcription. May function as an anchor to keep the PAF1 complex on target gene promoters, sequentially pausing RNA polymerase II-induced mRNA elongation. Inhibits FOXM1-mediated transcription of PHB2. In Homo sapiens (Human), this protein is Transcriptional regulator PINT87aa.